A 136-amino-acid chain; its full sequence is uncharacterized protein (136 aa).

The protein resides in the mitochondrion. This is an uncharacterized protein from Arabidopsis thaliana (Mouse-ear cress).